Here is a 102-residue protein sequence, read N- to C-terminus: Large ribosomal subunit protein bL21 (102 aa).

This sequence belongs to the bacterial ribosomal protein bL21 family. As to quaternary structure, part of the 50S ribosomal subunit. Contacts protein L20.

Functionally, this protein binds to 23S rRNA in the presence of protein L20. This Shouchella clausii (strain KSM-K16) (Alkalihalobacillus clausii) protein is Large ribosomal subunit protein bL21.